A 293-amino-acid chain; its full sequence is AM-toxin biosynthesis protein 14 (293 aa).

The next 5 membrane-spanning stretches (helical) occupy residues 33–53, 73–93, 148–168, 183–203, and 221–241; these read SATASLPIGFSSLFLLTEVYI, IAVNTGLWICCLVLSIVALVL, GVLALVLTACLQCAAAGLCVW, LVPILHVGWGLHYTVFLLWIL, and VWCLLVAPLFISALVGATPLT.

The protein resides in the membrane. It functions in the pathway mycotoxin biosynthesis. Part of the gene clusters that mediate the biosynthesis of AM-toxins, host-selective toxins (HSTs) causing Alternaria blotch on apple, a worldwide distributed disease. AM-toxins are cyclic depsipeptides containing the 3 residues 2-hydroxy-isovaleric acid (2-HIV), dehydroalanine, L-alanine which are common for all 3 AM-toxins I to III. The fourth precursor is L-alpha-amino-methoxyphenyl-valeric acid (L-Amv) for AM-toxin I, L-alpha-amino-phenyl-valeric acid (L-Apv) for AM-toxin II, and L-alpha-amino-hydroxyphenyl-valeric acid (L-Ahv) for AM-toxin III. AM-toxins have two target sites for affecting susceptible apple cells; they cause invagination of the plasma membrane and electrolyte loss and chloroplast disorganization. The non-ribosomal peptide synthetase AMT1 contains 4 catalytic modules and is responsible for activation of each residue in AM-toxin. The aldo-keto reductase AMT2 catalyzes the conversion of 2-keto-isovaleric acid (2-KIV) to 2-hydroxy-isovaleric acid (2-HIV), one of the precursor residues incorporated by AMT1 during AM-toxin biosynthesis, by reduction of its ketone to an alcohol. The cytochrome P450 monooxygenase AMT3 and the thioesterase AMT4 are also important for AM-toxin production, but their exact function within the AM-toxin biosynthesis are not known yet. Up to 21 proteins (including AMT1 to AMT4) are predicted to be involved in AM-toxin biosynthesis since their expression ishighly up-regulated in AM-toxin-producing cultures. This Alternaria alternata (Alternaria rot fungus) protein is AM-toxin biosynthesis protein 14.